A 214-amino-acid chain; its full sequence is Large ribosomal subunit protein uL16 (214 aa).

Citrulline is present on arginine 32. Residue lysine 175 forms a Glycyl lysine isopeptide (Lys-Gly) (interchain with G-Cter in SUMO2) linkage. Lysine 188 participates in a covalent cross-link: Glycyl lysine isopeptide (Lys-Gly) (interchain with G-Cter in ubiquitin).

The protein belongs to the universal ribosomal protein uL16 family. As to quaternary structure, component of the large ribosomal subunit. Mature ribosomes consist of a small (40S) and a large (60S) subunit. The 40S subunit contains about 33 different proteins and 1 molecule of RNA (18S). The 60S subunit contains about 49 different proteins and 3 molecules of RNA (28S, 5.8S and 5S). In terms of processing, citrullinated by PADI4. Ufmylated by UFL1.

The protein resides in the cytoplasm. In terms of biological role, component of the large ribosomal subunit. Plays a role in the formation of actively translating ribosomes. May play a role in the embryonic brain development. This is Large ribosomal subunit protein uL16 from Bos taurus (Bovine).